A 357-amino-acid polypeptide reads, in one-letter code: Phosphoribosylformylglycinamidine cyclo-ligase (357 aa).

This sequence belongs to the AIR synthase family.

It is found in the cytoplasm. It catalyses the reaction 2-formamido-N(1)-(5-O-phospho-beta-D-ribosyl)acetamidine + ATP = 5-amino-1-(5-phospho-beta-D-ribosyl)imidazole + ADP + phosphate + H(+). It functions in the pathway purine metabolism; IMP biosynthesis via de novo pathway; 5-amino-1-(5-phospho-D-ribosyl)imidazole from N(2)-formyl-N(1)-(5-phospho-D-ribosyl)glycinamide: step 2/2. In Rhizobium rhizogenes (strain K84 / ATCC BAA-868) (Agrobacterium radiobacter), this protein is Phosphoribosylformylglycinamidine cyclo-ligase.